Reading from the N-terminus, the 326-residue chain is Undecaprenyl-phosphate 4-deoxy-4-formamido-L-arabinose transferase (326 aa).

2 consecutive transmembrane segments (helical) span residues 235–255 (LLSVVGSVVALSGFLLAVLLI) and 270–290 (VFTLFAVLFTFIGAQFVGMGL).

This sequence belongs to the glycosyltransferase 2 family.

Its subcellular location is the cell inner membrane. It catalyses the reaction UDP-4-deoxy-4-formamido-beta-L-arabinose + di-trans,octa-cis-undecaprenyl phosphate = 4-deoxy-4-formamido-alpha-L-arabinopyranosyl di-trans,octa-cis-undecaprenyl phosphate + UDP. Its pathway is glycolipid biosynthesis; 4-amino-4-deoxy-alpha-L-arabinose undecaprenyl phosphate biosynthesis; 4-amino-4-deoxy-alpha-L-arabinose undecaprenyl phosphate from UDP-4-deoxy-4-formamido-beta-L-arabinose and undecaprenyl phosphate: step 1/2. It functions in the pathway bacterial outer membrane biogenesis; lipopolysaccharide biosynthesis. Functionally, catalyzes the transfer of 4-deoxy-4-formamido-L-arabinose from UDP to undecaprenyl phosphate. The modified arabinose is attached to lipid A and is required for resistance to polymyxin and cationic antimicrobial peptides. This chain is Undecaprenyl-phosphate 4-deoxy-4-formamido-L-arabinose transferase, found in Serratia proteamaculans (strain 568).